We begin with the raw amino-acid sequence, 101 residues long: Protein SSXA1 (101 aa).

The KRAB-related domain maps to 19 to 83; that stretch reads ETCQAFEDIS…ERVTKSVLSD (65 aa). The disordered stretch occupies residues 73-101; it reads KERVTKSVLSDSDEVSSHESQDKRKNPVV. A compositionally biased stretch (basic and acidic residues) spans 87-101; the sequence is VSSHESQDKRKNPVV.

The protein belongs to the SSX family. As to expression, specifically expressed in testis (at protein level). Not detected in other tissues tested (at protein level).

It localises to the nucleus. Could act as a modulator of transcription. This is Protein SSXA1 from Mus musculus (Mouse).